We begin with the raw amino-acid sequence, 494 residues long: UDP-N-acetylmuramate--L-alanine ligase (494 aa).

Position 122–128 (glycine 122–threonine 128) interacts with ATP.

The protein belongs to the MurCDEF family.

Its subcellular location is the cytoplasm. It carries out the reaction UDP-N-acetyl-alpha-D-muramate + L-alanine + ATP = UDP-N-acetyl-alpha-D-muramoyl-L-alanine + ADP + phosphate + H(+). Its pathway is cell wall biogenesis; peptidoglycan biosynthesis. Cell wall formation. The chain is UDP-N-acetylmuramate--L-alanine ligase from Mycobacterium bovis (strain ATCC BAA-935 / AF2122/97).